The chain runs to 360 residues: Phenylalanine--tRNA ligase alpha subunit (360 aa).

Glutamate 260 is a Mg(2+) binding site.

This sequence belongs to the class-II aminoacyl-tRNA synthetase family. Phe-tRNA synthetase alpha subunit type 1 subfamily. Tetramer of two alpha and two beta subunits. It depends on Mg(2+) as a cofactor.

Its subcellular location is the cytoplasm. It catalyses the reaction tRNA(Phe) + L-phenylalanine + ATP = L-phenylalanyl-tRNA(Phe) + AMP + diphosphate + H(+). This is Phenylalanine--tRNA ligase alpha subunit from Rhizobium etli (strain ATCC 51251 / DSM 11541 / JCM 21823 / NBRC 15573 / CFN 42).